We begin with the raw amino-acid sequence, 185 residues long: Ribosome-recycling factor (185 aa).

It belongs to the RRF family.

The protein resides in the cytoplasm. In terms of biological role, responsible for the release of ribosomes from messenger RNA at the termination of protein biosynthesis. May increase the efficiency of translation by recycling ribosomes from one round of translation to another. This chain is Ribosome-recycling factor, found in Oceanobacillus iheyensis (strain DSM 14371 / CIP 107618 / JCM 11309 / KCTC 3954 / HTE831).